Here is a 188-residue protein sequence, read N- to C-terminus: Large ribosomal subunit protein bL32m (188 aa).

Zn(2+)-binding residues include Cys-110, Cys-113, Cys-123, and Cys-126. The tract at residues 162-188 is disordered; it reads GETPSEHDQGKRIIERERKRPSWFTQN. Positions 165–181 are enriched in basic and acidic residues; that stretch reads PSEHDQGKRIIERERKR.

Belongs to the bacterial ribosomal protein bL32 family. Component of the mitochondrial ribosome large subunit (39S) which comprises a 16S rRNA and about 50 distinct proteins. MRPL32 precursor is processed by the m-AAA protease (composed of AFG3L2 and SPG7), which cleaves the N-terminal transit peptide. Cleavage by the m-AAA protease takes place prior to assembly into the large subunit, an essential step for mitochondrial ribosome (mitoribosome) assembly. Proper processing by the m-AAA protease is dependent on the zinc-binding region within the tightly folded C-terminal domain of MRPL32: zinc-dependent folding halts degradation initiated from the N-terminus and triggers the release of mature MRPL32.

It localises to the mitochondrion. Component of the mitochondrial large ribosomal subunit (mt-LSU). The mitochondrial ribosome (mitoribosome) is a large ribonucleoprotein complex responsible for the synthesis of proteins inside mitochondria. This is Large ribosomal subunit protein bL32m (MRPL32) from Bos taurus (Bovine).